The chain runs to 67 residues: Phycobilisome 7.8 kDa linker polypeptide, allophycocyanin-associated, core (67 aa).

Residues 1–56 (GRLFKITACVPSQTRIRTQRELQNTYFTKLVPYENWFREQQRIQKMGGKIVKVELA) enclose the CpcD-like domain.

It belongs to the phycobilisome linker protein family.

It localises to the cellular thylakoid membrane. Its function is as follows. Rod linker protein, associated with allophycocyanin. Linker polypeptides determine the state of aggregation and the location of the disk-shaped phycobiliprotein units within the phycobilisome and modulate their spectroscopic properties in order to mediate a directed and optimal energy transfer. The protein is Phycobilisome 7.8 kDa linker polypeptide, allophycocyanin-associated, core (apcC) of Mastigocladus laminosus (Fischerella sp.).